We begin with the raw amino-acid sequence, 482 residues long: Regulator of nonsense transcripts UPF3 (482 aa).

Residues 9–14 are binds to UPF2; it reads KVVVRH. The necessary for interaction with UPF2 stretch occupies residues 9 to 219; that stretch reads KVVVRHLPPS…EKESSKNVPR (211 aa). The tract at residues 53–482 is sufficient for association with EJC core; that stretch reads YSRAYVSFKA…MWIQKPSSGT (430 aa). The segment at 173 to 482 is disordered; it reads PQGLSDIRRG…MWIQKPSSGT (310 aa). Residues 201-214 are compositionally biased toward basic and acidic residues; sequence RNSEKKKYVEKESS. 3 stretches are compositionally biased toward polar residues: residues 223-239, 292-308, and 325-336; these read ADVS…NSSG, DTNL…NQKS, and RPSQSSTFVQSE. 2 stretches are compositionally biased toward basic and acidic residues: residues 337-348 and 370-394; these read QRVEPSEAENYK and EKQE…RDGS. A compositionally biased stretch (polar residues) spans 414–435; it reads SQRSGEVVNSSGGHTLENGSAR.

Belongs to the RENT3 family. In terms of assembly, found in a post-splicing messenger ribonucleoprotein (mRNP) complex. Associates with the exon junction complex (EJC). Interacts with CPL1/FRY2.

The protein localises to the nucleus. Its subcellular location is the nucleolus. It is found in the cytoplasm. In terms of biological role, recruits UPF2 at the cytoplasmic side of the nuclear envelope and the subsequent formation of an UPF1-UPF2-UPF3 surveillance complex (including UPF1 bound to release factors at the stalled ribosome) is believed to activate NMD. Binds spliced mRNA upstream of exon-exon junctions. Involved in nonsense-mediated decay (NMD) of mRNAs containing premature stop codons (premature termination codon PTC) by associating with the nuclear exon junction complex (EJC) and serving as link between the EJC core and NMD machinery. Eliminates the production of nonsense-containing RNAs (ncRNAs). Required for plant development and adaptation to environmental stresses, including plant defense and response to wounding. This Arabidopsis thaliana (Mouse-ear cress) protein is Regulator of nonsense transcripts UPF3.